The chain runs to 470 residues: Glutamyl-tRNA(Gln) amidotransferase subunit A (470 aa).

Residues K71 and S146 each act as charge relay system in the active site. The active-site Acyl-ester intermediate is S170.

This sequence belongs to the amidase family. GatA subfamily. As to quaternary structure, heterotrimer of A, B and C subunits.

It carries out the reaction L-glutamyl-tRNA(Gln) + L-glutamine + ATP + H2O = L-glutaminyl-tRNA(Gln) + L-glutamate + ADP + phosphate + H(+). Allows the formation of correctly charged Gln-tRNA(Gln) through the transamidation of misacylated Glu-tRNA(Gln) in organisms which lack glutaminyl-tRNA synthetase. The reaction takes place in the presence of glutamine and ATP through an activated gamma-phospho-Glu-tRNA(Gln). The chain is Glutamyl-tRNA(Gln) amidotransferase subunit A from Akkermansia muciniphila (strain ATCC BAA-835 / DSM 22959 / JCM 33894 / BCRC 81048 / CCUG 64013 / CIP 107961 / Muc).